We begin with the raw amino-acid sequence, 1350 residues long: Tectonin beta-propeller repeat-containing protein (1350 aa).

TECPR repeat units follow at residues 23-59 (GAWR…VHVH), 233-271 (LRWT…VRTG), 280-320 (DSWL…FRRG), and 336-371 (KGWV…HRSG). The span at 396–415 (SSLSIVSRKSGGSSSTPGSK) shows a compositional bias: low complexity. Disordered stretches follow at residues 396–420 (SSLS…QSFS) and 671–691 (SGSG…SGTF). The Galectin domain maps to 816 to 955 (YYNTLYNGMP…RIKLFNVLYR (140 aa)). TECPR repeat units lie at residues 966 to 1000 (MHWR…VYNG), 1187 to 1223 (DAWE…FRYG), 1232 to 1269 (DAWQ…VRKE), and 1278 to 1322 (SHWQ…RRCG).

Belongs to the TECPR1 family.

Involved in peroxisome biogenesis. In Drosophila melanogaster (Fruit fly), this protein is Tectonin beta-propeller repeat-containing protein (Pex23).